Reading from the N-terminus, the 351-residue chain is Probable glucuronosyltransferase Os10g0205300 (351 aa).

Residues 1-11 (MAAPPCPPRRP) are Cytoplasmic-facing. A helical; Signal-anchor for type II membrane protein transmembrane segment spans residues 12 to 32 (ISAPCFLLCFLLGFVAGLFPF). Residues 33-351 (AHRHLHLDLH…PLKKEARPLL (319 aa)) are Lumenal-facing. The tract at residues 138 to 169 (SSPVPDAPQDRPRRRGRRQDRPAVDSRARQRN) is disordered. Positions 156-169 (QDRPAVDSRARQRN) are enriched in basic and acidic residues. Asn-259 carries an N-linked (GlcNAc...) asparagine glycan.

It belongs to the glycosyltransferase 43 family.

Its subcellular location is the golgi apparatus membrane. Its function is as follows. Involved in the synthesis of glucuronoxylan hemicellulose in secondary cell walls. This chain is Probable glucuronosyltransferase Os10g0205300, found in Oryza sativa subsp. japonica (Rice).